A 477-amino-acid polypeptide reads, in one-letter code: Probable cytosolic Fe-S cluster assembly factor GG21400 (477 aa).

[4Fe-4S] cluster contacts are provided by Cys-23, Cys-68, Cys-71, Cys-74, Cys-187, Cys-243, Cys-395, and Cys-399.

The protein belongs to the NARF family.

Its function is as follows. Component of the cytosolic iron-sulfur (Fe/S) protein assembly machinery. Required for maturation of extramitochondrial Fe/S proteins. The sequence is that of Probable cytosolic Fe-S cluster assembly factor GG21400 from Drosophila erecta (Fruit fly).